The following is a 311-amino-acid chain: Ribosomal RNA small subunit methyltransferase H (311 aa).

S-adenosyl-L-methionine-binding positions include 32 to 34 (AGH), Asp52, Phe79, Asp100, and Gln107.

The protein belongs to the methyltransferase superfamily. RsmH family.

The protein localises to the cytoplasm. It catalyses the reaction cytidine(1402) in 16S rRNA + S-adenosyl-L-methionine = N(4)-methylcytidine(1402) in 16S rRNA + S-adenosyl-L-homocysteine + H(+). Its function is as follows. Specifically methylates the N4 position of cytidine in position 1402 (C1402) of 16S rRNA. The sequence is that of Ribosomal RNA small subunit methyltransferase H from Staphylococcus aureus (strain COL).